Reading from the N-terminus, the 155-residue chain is MSSQKGNVTRSRPQKHQNTFTFKNDKFDKSVQTKKINAKLHDGVCQRCKEVLEWRVKYSKYKPLSKPKKCVKCLQKTVKDSYHIMCRPCACELEVCAKCGKKEEIVIPFNKEPDAPENTENEGSGHRRRCGRKEDSDEDLDAESDSDGEDGDTQA.

Disordered stretches follow at residues 1-22 (MSSQ…TFTF) and 110-155 (NKEP…DTQA). An N-acetylserine modification is found at Ser-2. A phosphoserine mark is found at Ser-136, Ser-144, and Ser-146. Acidic residues predominate over residues 136–155 (SDEDLDAESDSDGEDGDTQA).

This is an uncharacterized protein from Mus musculus (Mouse).